Consider the following 437-residue polypeptide: Glycogen synthase (437 aa).

Lys-15 contacts ADP-alpha-D-glucose.

This sequence belongs to the glycosyltransferase 1 family. Bacterial/plant glycogen synthase subfamily.

It catalyses the reaction [(1-&gt;4)-alpha-D-glucosyl](n) + ADP-alpha-D-glucose = [(1-&gt;4)-alpha-D-glucosyl](n+1) + ADP + H(+). It participates in glycan biosynthesis; glycogen biosynthesis. Its function is as follows. Synthesizes alpha-1,4-glucan chains using ADP-glucose. In Thermus thermophilus (strain ATCC BAA-163 / DSM 7039 / HB27), this protein is Glycogen synthase.